Here is a 382-residue protein sequence, read N- to C-terminus: Mannitol-1-phosphate 5-dehydrogenase (382 aa).

NAD(+) is bound at residue 3–14 (ALHFGAGNIGRG).

It belongs to the mannitol dehydrogenase family.

The enzyme catalyses D-mannitol 1-phosphate + NAD(+) = beta-D-fructose 6-phosphate + NADH + H(+). This chain is Mannitol-1-phosphate 5-dehydrogenase, found in Salmonella agona (strain SL483).